A 382-amino-acid polypeptide reads, in one-letter code: Protein phosphatase 1A (382 aa).

Residue glycine 2 is the site of N-myristoyl glycine attachment. The region spanning arginine 23–phenylalanine 291 is the PPM-type phosphatase domain. Mn(2+) is bound by residues aspartate 60, glycine 61, aspartate 239, and aspartate 282. A phosphoserine mark is found at serine 375 and serine 377.

The protein belongs to the PP2C family. As to quaternary structure, monomer. Interacts with SMAD2; the interaction dephosphorylates SMAD2 in its C-terminal SXS motif resulting in disruption of the SMAD2/SMAD4 complex, SMAD2 nuclear export and termination of the TGF-beta-mediated signaling. Interacts with SMAD2; the interaction dephosphorylates SMAD2 in its C-terminal SXS motif resulting in disruption of the SMAD2/SMAD4 complex, SMAD2 nuclear export and termination of the TGF-beta-mediated signaling. Interacts with the phosphorylated form of IKBKB/IKKB. Mg(2+) is required as a cofactor. Requires Mn(2+) as cofactor. Post-translationally, N-myristoylation is essential for the recognition of its substrates for dephosphorylation.

The protein localises to the nucleus. It localises to the cytoplasm. Its subcellular location is the cytosol. It is found in the membrane. The catalysed reaction is O-phospho-L-seryl-[protein] + H2O = L-seryl-[protein] + phosphate. The enzyme catalyses O-phospho-L-threonyl-[protein] + H2O = L-threonyl-[protein] + phosphate. Enzyme with a broad specificity. Negatively regulates TGF-beta signaling through dephosphorylating SMAD2 and SMAD3, resulting in their dissociation from SMAD4, nuclear export of the SMADs and termination of the TGF-beta-mediated signaling. Dephosphorylates PRKAA1 and PRKAA2. Plays an important role in the termination of TNF-alpha-mediated NF-kappa-B activation through dephosphorylating and inactivating IKBKB/IKKB. The protein is Protein phosphatase 1A (PPM1A) of Oryctolagus cuniculus (Rabbit).